We begin with the raw amino-acid sequence, 180 residues long: Adenine phosphoribosyltransferase (180 aa).

This sequence belongs to the purine/pyrimidine phosphoribosyltransferase family. As to quaternary structure, homodimer.

The protein resides in the cytoplasm. The enzyme catalyses AMP + diphosphate = 5-phospho-alpha-D-ribose 1-diphosphate + adenine. It participates in purine metabolism; AMP biosynthesis via salvage pathway; AMP from adenine: step 1/1. Its function is as follows. Catalyzes a salvage reaction resulting in the formation of AMP, that is energically less costly than de novo synthesis. The polypeptide is Adenine phosphoribosyltransferase (Mannheimia succiniciproducens (strain KCTC 0769BP / MBEL55E)).